The following is a 966-amino-acid chain: Next to BRCA1 gene 1 protein (966 aa).

Residues Q4–G85 form the PB1 domain. Phosphoserine is present on S116. The ZZ-type zinc finger occupies S212 to V264. Residues C217, C220, C231, C234, C240, C243, H250, and H254 each coordinate Zn(2+). An ATG8 family protein-binding region spans residues A542 to V636. T586 carries the post-translational modification Phosphothreonine; by GSK3-alpha. Residues S590, S596, and S625 each carry the phosphoserine modification. Residues E699–K718 show a composition bias toward acidic residues. Disordered stretches follow at residues E699–S728, M750–E792, and V848–S879. Positions A727–E738 are ATG8 family protein-binding. The UBA domain maps to S913 to N957.

As to quaternary structure, homooligomer and heterooligomer. Interacts with TRIM55. Interacts with titin/TTN. Interacts with RNF29, USP8, MAP1LC3A, MAP1LC3B, MAP1LC3C, GABARAP, GABARAPL1 and GABARAPL2. Binds to ubiquitin and ubiquitinated proteins. Interacts with SQSTM1. Interacts with TAX1BP1. Interacts with IRF3; this interaction mediates autophagic degradation of IRF3. Interacts with IL12A and IL12B. (Microbial infection) Interacts with Influenza A virus protein PB1; this interaction promotes NBR1-mediated selective autophagic degradation of MAVS. Post-translationally, (Microbial infection) Cleaved by S.pyogenes SpeB protease; leading to its degradation. Degradation by SpeB prevents autophagy, promoting to S.pyogenes intracellular replication. Phosphorylated by GSK3A; this phosphorylation inhibits NBR1 involvement in the formation of ubiquitinated protein aggregates.

Its subcellular location is the cytoplasm. The protein localises to the cytoplasmic vesicle. It localises to the autophagosome. It is found in the lysosome. The protein resides in the myofibril. Its subcellular location is the sarcomere. The protein localises to the m line. In terms of biological role, ubiquitin-binding autophagy adapter that participates in different processes including host defense or intracellular homeostasis. Possesses a double function during the selective autophagy by acting as a shuttle bringing ubiquitinated proteins to autophagosomes and also by participating in the formation of protein aggregates. Plays a role in the regulation of the innate immune response by modulating type I interferon production and targeting ubiquitinated IRF3 for autophagic degradation. In response to oxidative stress, promotes an increase in SQSTM1 levels, phosphorylation, and body formation by preventing its autophagic degradation. In turn, activates the KEAP1-NRF2/NFE2L2 antioxidant pathway. Also plays non-autophagy role by mediating the shuttle of IL-12 to late endosome for subsequent secretion. This chain is Next to BRCA1 gene 1 protein (NBR1), found in Homo sapiens (Human).